Here is a 225-residue protein sequence, read N- to C-terminus: UPF0758 protein Shewmr7_0359 (225 aa).

In terms of domain architecture, MPN spans 102–224; it reads VLTNPDLTRD…IVSFAERGWI (123 aa). Zn(2+)-binding residues include H173, H175, and D186. Residues 173 to 186 carry the JAMM motif motif; sequence HNHPSGIAEPSQAD.

This sequence belongs to the UPF0758 family.

The sequence is that of UPF0758 protein Shewmr7_0359 from Shewanella sp. (strain MR-7).